Consider the following 469-residue polypeptide: Keratin, type I cytoskeletal 16 (469 aa).

The segment at 1 to 20 (MATCSRQFTSSSSMKGSCGI) is disordered. A head region spans residues 1–112 (MATCSRQFTS…GIGDGLLVGS (112 aa)). Positions 113–148 (EKVTMQNLNDRLATYLDKVRALEEANRDLEVKIRDW) are coil 1A. Residues 113–424 (EKVTMQNLND…RLLDGENIHS (312 aa)) enclose the IF rod domain. A linker 1 region spans residues 149 to 166 (YQRQRPTEIKDYSPYFKT). The segment at 167-258 (IEDLKSKIII…KNHEEEMLAL (92 aa)) is coil 1B. The segment at 259–281 (RGQTGGDVNVEMDAAPGVDLSRI) is linker 12. Residues 282–420 (LNEMRDQYEQ…ATYRRLLDGE (139 aa)) form a coil 2 region. The segment at 421–469 (NIHSSSQHSSGQSYSSREVFSSSSRQPRSILKEQGSTSFSQSQSQSSRD) is tail. Residues 422-469 (IHSSSQHSSGQSYSSREVFSSSSRQPRSILKEQGSTSFSQSQSQSSRD) are disordered. Low complexity-rich tracts occupy residues 423–444 (HSSS…SSSS) and 454–469 (QGST…SSRD).

This sequence belongs to the intermediate filament family. Heterodimer of a type I and a type II keratin. KRT16 associates with KRT6 isomers (KRT6A or KRT6B). Interacts with TCHP. Interacts with TRADD. In terms of tissue distribution, expressed in the epithelia of the tongue, upper and lower palate, footpad, proximal nail fold and nail bed, penile spine, sweat gland ducts, and back epidermis (at protein level). Expressed in upper suprabasal layers of the corneal epithelium (at protein level). Expressed in internal stratified epithelia in the esophagus and vagina (at protein level). Expressed in transitional stratified squamous epithelia in the forestomach, anal canal, and nasal cavity (at protein level). Expressed in transitional epithelia of the ureter, bladder and urethra (at protein level). In mature hair follicles, expressed in the companion layer of the outer root sheath during anagen and in the club hair sheath during catagen and telogen (at protein level).

In terms of biological role, epidermis-specific type I keratin that plays a key role in skin. Acts as a regulator of innate immunity in response to skin barrier breach: required for some inflammatory checkpoint for the skin barrier maintenance. The chain is Keratin, type I cytoskeletal 16 (Krt16) from Mus musculus (Mouse).